The primary structure comprises 364 residues: Spermidine/putrescine import ATP-binding protein PotA (364 aa).

In terms of domain architecture, ABC transporter spans 5-235; the sequence is LSLKSVSKSY…PVNRFVADFI (231 aa). 37–44 contacts ATP; sequence GPSGCGKT.

This sequence belongs to the ABC transporter superfamily. Spermidine/putrescine importer (TC 3.A.1.11.1) family. The complex is composed of two ATP-binding proteins (PotA), two transmembrane proteins (PotB and PotC) and a solute-binding protein (PotD).

Its subcellular location is the cell membrane. It carries out the reaction ATP + H2O + polyamine-[polyamine-binding protein]Side 1 = ADP + phosphate + polyamineSide 2 + [polyamine-binding protein]Side 1.. Its function is as follows. Part of the ABC transporter complex PotABCD involved in spermidine/putrescine import. Responsible for energy coupling to the transport system. The chain is Spermidine/putrescine import ATP-binding protein PotA from Staphylococcus aureus (strain USA300).